Consider the following 1960-residue polypeptide: Myosin-9 (1960 aa).

A2 is subject to N-acetylalanine. Positions 2–838 are mediates interaction with LIMCH1; sequence AQQAADKYLY…RLFTKVKPLL (837 aa). An N6-acetyllysine modification is found at K8. Y11 is modified (phosphotyrosine). The Myosin N-terminal SH3-like domain maps to 27–77; it reads AAKKLVWVPSDKSGFEPASLKEEVGEEAIVELVENGKKVKVNKDDIQKMNP. One can recognise a Myosin motor domain in the interval 81–776; that stretch reads SKVEDMAELT…VLAHLEEERD (696 aa). K102 carries the post-translational modification N6-acetyllysine. Position 174 to 181 (174 to 181) interacts with ATP; that stretch reads GESGAGKT. N6-acetyllysine is present on residues K299, K435, and K613. Position 628 is a phosphoserine (S628). The tract at residues 654–676 is actin-binding; the sequence is LAKLMATLRNTNPNFVRCIIPNH. At Y754 the chain carries Phosphotyrosine. Residues 779–808 form the IQ domain; sequence ITDVIIGFQACCRGYLARKAFAKRQQQLTA. Positions 837-1926 form a coiled coil; that stretch reads LLQVSRQEEE…LKNKLRRGDL (1090 aa). K850 is modified (N6-succinyllysine). N6-acetyllysine is present on residues K860, K975, and K1024. Phosphoserine is present on S1114. The tract at residues 1117 to 1137 is disordered; that stretch reads QEDLESERASRNKAEKQKRDL. A compositionally biased stretch (basic and acidic residues) spans 1122–1137; it reads SERASRNKAEKQKRDL. N6-acetyllysine is present on residues K1234, K1249, K1357, K1392, K1404, K1410, K1459, and K1638. K1669 carries the N6-succinyllysine modification. S1714 is modified (phosphoserine). Residues K1793, K1802, and K1845 each carry the N6-acetyllysine modification. Residues 1877–1918 are disordered; the sequence is RQLEEAEEEAQRANASRRKLQRELEDATETADAMNREVSSLK. Residue R1923 is modified to Omega-N-methylarginine. Positions 1934–1960 are disordered; sequence VARKGAGDCSDEEVDGKADGAEAKAAE. S1943 is subject to Phosphoserine. Basic and acidic residues predominate over residues 1948–1960; the sequence is DGKADGAEAKAAE.

It belongs to the TRAFAC class myosin-kinesin ATPase superfamily. Myosin family. In terms of assembly, myosin is a hexameric protein that consists of 2 heavy chain subunits (MHC), 2 alkali light chain subunits (MLC) and 2 regulatory light chain subunits (MLC-2). Interacts with RASIP1. Interacts with DDR1. Interacts with PDLIM2. Interacts with SVIL. Interacts with HTRA3. Interacts with Myo7a. Interacts with CFAP95. Interacts with LIMCH1; independently of the integration of MYH9 into the myosin complex. Interacts with RAB3A. Interacts with ZBED4. Interacts with S100A4; this interaction increases cell motility. Post-translationally, ISGylated. Ubiquitination.

It is found in the cytoplasm. Its subcellular location is the cytoskeleton. The protein resides in the cell cortex. It localises to the cytoplasmic vesicle. The protein localises to the secretory vesicle. It is found in the cortical granule. Its function is as follows. Cellular myosin that appears to play a role in cytokinesis, cell shape, and specialized functions such as secretion and capping. Required for cortical actin clearance prior to oocyte exocytosis. Promotes cell motility in conjunction with S100A4. During cell spreading, plays an important role in cytoskeleton reorganization, focal contact formation (in the margins but not the central part of spreading cells), and lamellipodial retraction; this function is mechanically antagonized by MYH10. This Canis lupus familiaris (Dog) protein is Myosin-9 (MYH9).